Reading from the N-terminus, the 439-residue chain is Ribulose bisphosphate carboxylase/oxygenase activase, chloroplastic (439 aa).

167–174 contacts ATP; the sequence is GGKGQGKS.

This sequence belongs to the RuBisCO activase family.

It localises to the plastid. It is found in the chloroplast stroma. Activation of RuBisCO (ribulose-1,5-bisphosphate carboxylase/oxygenase; EC 4.1.1.39) involves the ATP-dependent carboxylation of the epsilon-amino group of lysine leading to a carbamate structure. This Vigna radiata var. radiata (Mung bean) protein is Ribulose bisphosphate carboxylase/oxygenase activase, chloroplastic (RCA).